A 133-amino-acid polypeptide reads, in one-letter code: Histone H2A (133 aa).

The span at 1–10 shows a compositional bias: gly residues; it reads MTGGKSGGKA. The segment at 1–25 is disordered; it reads MTGGKSGGKASGSKSSQSRSSKAGL. Residues Lys5 and Lys9 each carry the N6-acetyllysine modification. The span at 11–24 shows a compositional bias: low complexity; that stretch reads SGSKSSQSRSSKAG. Position 106 is an N5-methylglutamine (Gln106). Ser130 carries the post-translational modification Phosphoserine. The [ST]-Q motif motif lies at 130–131; that stretch reads SQ.

The protein belongs to the histone H2A family. As to quaternary structure, the nucleosome is a histone octamer containing two molecules each of H2A, H2B, H3 and H4 assembled in one H3-H4 heterotetramer and two H2A-H2B heterodimers. The octamer wraps approximately 147 bp of DNA. In terms of processing, phosphorylated to form H2AS128ph (gamma-H2A) in response to DNA double-strand breaks (DSBs) generated by exogenous genotoxic agents and by stalled replication forks. Phosphorylation is dependent on the DNA damage checkpoint kinases MEC1/ATR and TEL1/ATM, spreads on either side of a detected DSB site and may mark the surrounding chromatin for recruitment of proteins required for DNA damage signaling and repair. Gamma-H2A is removed from the DNA prior to the strand invasion-primer extension step of the repair process and subsequently dephosphorylated. Dephosphorylation is necessary for efficient recovery from the DNA damage checkpoint. Post-translationally, acetylated by ESA1 to form H2AK4ac and H2AK7ac.

It is found in the nucleus. The protein localises to the chromosome. Its function is as follows. Core component of nucleosome which plays a central role in DNA double strand break (DSB) repair. Nucleosomes wrap and compact DNA into chromatin, limiting DNA accessibility to the cellular machineries which require DNA as a template. Histones thereby play a central role in transcription regulation, DNA repair, DNA replication and chromosomal stability. DNA accessibility is regulated via a complex set of post-translational modifications of histones, also called histone code, and nucleosome remodeling. This is Histone H2A (HTA1) from Coccidioides immitis (strain RS) (Valley fever fungus).